The sequence spans 282 residues: Pantothenate synthetase (282 aa).

30–37 is a binding site for ATP; it reads MGALHAGH. His-37 acts as the Proton donor in catalysis. Gln-61 lines the (R)-pantoate pocket. Residue Gln-61 coordinates beta-alanine. 147 to 150 lines the ATP pocket; it reads GEKD. Gln-153 lines the (R)-pantoate pocket. Residues Val-176 and 184 to 187 contribute to the ATP site; that span reads LSSR.

The protein belongs to the pantothenate synthetase family. Homodimer.

It is found in the cytoplasm. The catalysed reaction is (R)-pantoate + beta-alanine + ATP = (R)-pantothenate + AMP + diphosphate + H(+). It functions in the pathway cofactor biosynthesis; (R)-pantothenate biosynthesis; (R)-pantothenate from (R)-pantoate and beta-alanine: step 1/1. Catalyzes the condensation of pantoate with beta-alanine in an ATP-dependent reaction via a pantoyl-adenylate intermediate. The protein is Pantothenate synthetase of Bacteroides fragilis (strain YCH46).